Reading from the N-terminus, the 159-residue chain is Aspartate carbamoyltransferase regulatory chain (159 aa).

Residues C108, C113, C138, and C141 each contribute to the Zn(2+) site.

This sequence belongs to the PyrI family. As to quaternary structure, contains catalytic and regulatory chains. It depends on Zn(2+) as a cofactor.

Its function is as follows. Involved in allosteric regulation of aspartate carbamoyltransferase. The polypeptide is Aspartate carbamoyltransferase regulatory chain (Thermofilum pendens (strain DSM 2475 / Hrk 5)).